A 789-amino-acid polypeptide reads, in one-letter code: Glycerol-3-phosphate acyltransferase (789 aa).

Residues 276 to 281 (HRSYID) carry the HXXXXD motif motif.

This sequence belongs to the GPAT/DAPAT family.

The protein resides in the cell membrane. It carries out the reaction sn-glycerol 3-phosphate + an acyl-CoA = a 1-acyl-sn-glycero-3-phosphate + CoA. The protein operates within phospholipid metabolism; CDP-diacylglycerol biosynthesis; CDP-diacylglycerol from sn-glycerol 3-phosphate: step 1/3. The sequence is that of Glycerol-3-phosphate acyltransferase from Mycobacterium bovis (strain ATCC BAA-935 / AF2122/97).